The primary structure comprises 200 residues: LHFPL tetraspan subfamily member 6 protein (200 aa).

An N-terminal signal peptide occupies residues 1 to 23; the sequence is MASSLTCTGVIWALLSFLSAATS. Helical transmembrane passes span 84-104, 123-143, and 166-186; these read ICTI…LTAL, GIQF…PLGW, and IGWA…LCTW.

It belongs to the LHFP family.

Its subcellular location is the membrane. This chain is LHFPL tetraspan subfamily member 6 protein, found in Rattus norvegicus (Rat).